We begin with the raw amino-acid sequence, 184 residues long: Protein Syd (184 aa).

This sequence belongs to the Syd family.

It is found in the cell inner membrane. Functionally, interacts with the SecY protein in vivo. May bind preferentially to an uncomplexed state of SecY, thus functioning either as a chelating agent for excess SecY in the cell or as a regulatory factor that negatively controls the translocase function. The chain is Protein Syd from Photobacterium profundum (strain SS9).